The primary structure comprises 119 residues: Ribosome-binding factor A (119 aa).

It belongs to the RbfA family. In terms of assembly, monomer. Binds 30S ribosomal subunits, but not 50S ribosomal subunits or 70S ribosomes.

Its subcellular location is the cytoplasm. Functionally, one of several proteins that assist in the late maturation steps of the functional core of the 30S ribosomal subunit. Associates with free 30S ribosomal subunits (but not with 30S subunits that are part of 70S ribosomes or polysomes). Required for efficient processing of 16S rRNA. May interact with the 5'-terminal helix region of 16S rRNA. The chain is Ribosome-binding factor A from Limosilactobacillus reuteri (strain DSM 20016) (Lactobacillus reuteri).